The chain runs to 325 residues: Cytochrome c1, heme protein, mitochondrial (325 aa).

A mitochondrion-targeting transit peptide spans 1 to 84 (MAAAAASLRG…AMALHSAVSA (84 aa)). Residues 85–281 (SDLELHPPSY…TFLRWASEPE (197 aa)) are Mitochondrial intermembrane-facing. One can recognise a Cytochrome c domain in the interval 108–209 (TSIRRGFQVY…IVRARHGGED (102 aa)). Residues Cys121, Cys124, and His125 each contribute to the heme c site. Ser182 is modified (phosphoserine). Heme c is bound at residue Met244. The chain crosses the membrane as a helical span at residues 282–315 (HDHRKRMGLKMLMMMALLVPLVYTIKRHKWSVLK). At 316–325 (SRKLAYRPPK) the chain is on the mitochondrial matrix side.

Belongs to the cytochrome c family. As to quaternary structure, component of the ubiquinol-cytochrome c oxidoreductase (cytochrome b-c1 complex, complex III, CIII), a multisubunit enzyme composed of 11 subunits. The complex is composed of 3 respiratory subunits cytochrome b, cytochrome c1 and Rieske protein UQCRFS1, 2 core protein subunits UQCRC1/QCR1 and UQCRC2/QCR2, and 6 low-molecular weight protein subunits UQCRH/QCR6, UQCRB/QCR7, UQCRQ/QCR8, UQCR10/QCR9, UQCR11/QCR10 and subunit 9, the cleavage product of Rieske protein UQCRFS1. The complex exists as an obligatory dimer and forms supercomplexes (SCs) in the inner mitochondrial membrane with NADH-ubiquinone oxidoreductase (complex I, CI) and cytochrome c oxidase (complex IV, CIV), resulting in different assemblies (supercomplex SCI(1)III(2)IV(1) and megacomplex MCI(2)III(2)IV(2)). Interacts with FLVCR2; this interaction occurs in the absence of heme and is disrupted upon heme binding. Heme c is required as a cofactor.

It localises to the mitochondrion inner membrane. It carries out the reaction a quinol + 2 Fe(III)-[cytochrome c](out) = a quinone + 2 Fe(II)-[cytochrome c](out) + 2 H(+)(out). Its function is as follows. Component of the ubiquinol-cytochrome c oxidoreductase, a multisubunit transmembrane complex that is part of the mitochondrial electron transport chain which drives oxidative phosphorylation. The respiratory chain contains 3 multisubunit complexes succinate dehydrogenase (complex II, CII), ubiquinol-cytochrome c oxidoreductase (cytochrome b-c1 complex, complex III, CIII) and cytochrome c oxidase (complex IV, CIV), that cooperate to transfer electrons derived from NADH and succinate to molecular oxygen, creating an electrochemical gradient over the inner membrane that drives transmembrane transport and the ATP synthase. The cytochrome b-c1 complex catalyzes electron transfer from ubiquinol to cytochrome c, linking this redox reaction to translocation of protons across the mitochondrial inner membrane, with protons being carried across the membrane as hydrogens on the quinol. In the process called Q cycle, 2 protons are consumed from the matrix, 4 protons are released into the intermembrane space and 2 electrons are passed to cytochrome c. Cytochrome c1 is a catalytic core subunit containing a c-type heme. It transfers electrons from the [2Fe-2S] iron-sulfur cluster of the Rieske protein to cytochrome c. The protein is Cytochrome c1, heme protein, mitochondrial (CYC1) of Homo sapiens (Human).